The following is a 445-amino-acid chain: Histamine H3 receptor (445 aa).

The Extracellular portion of the chain corresponds to 1–39 (MERAPPDGLMNASGALAGEAAAAGGARGFSAAWTAVLAA). The N-linked (GlcNAc...) asparagine glycan is linked to asparagine 11. A helical membrane pass occupies residues 40–60 (LMALLIVATVLGNALVMLAFV). Topologically, residues 61–70 (ADSSLRTQNN) are cytoplasmic. The chain crosses the membrane as a helical span at residues 71–91 (FFLLNLAISDFLVGAFCIPLY). Topologically, residues 92 to 108 (VPYVLTGRWTFGRGLCK) are extracellular. A disulfide bond links cysteine 107 and cysteine 188. A helical transmembrane segment spans residues 109–129 (LWLVVDYLLCASSVFNIVLIS). Over 130–156 (YDRFLSVTRAVSYRAQQGDTRRAVRKM) the chain is Cytoplasmic. A helical transmembrane segment spans residues 157–177 (ALVWVLAFLLYGPAILSWEYL). The Extracellular segment spans residues 178-196 (SGGSSIPEGHCYAEFFYNW). A helical membrane pass occupies residues 197–217 (YFLITASTLEFFTPFLSVTFF). At 218 to 359 (NLSIYLNIQR…LSRDKKVAKS (142 aa)) the chain is on the cytoplasmic side. 2 disordered regions span residues 234-259 (DGGR…PSCW) and 273-336 (HRYG…LEKR). Residues 241 to 256 (PEPPPDAQPSPPPAPP) show a composition bias toward pro residues. Gly residues predominate over residues 289–299 (AGLGGGSGGGA). Over residues 300 to 312 (AASPTSSSGSSSR) the composition is skewed to low complexity. The chain crosses the membrane as a helical span at residues 360–380 (LAIIVSIFGLCWAPYTLLMII). The Extracellular portion of the chain corresponds to 381-396 (RAACHGHCVPDYWYET). Residues 397–417 (SFWLLWANSAVNPVLYPLCHY) traverse the membrane as a helical segment. Residues 418–445 (SFRRAFTKLLCPQKLKVQPHGSLEQCWK) are Cytoplasmic-facing. Serine 439 carries the post-translational modification Phosphoserine.

This sequence belongs to the G-protein coupled receptor 1 family.

It localises to the cell membrane. The H3 subclass of histamine receptors could mediate the histamine signals in CNS and peripheral nervous system. Signals through the inhibition of adenylate cyclase and displays high constitutive activity (spontaneous activity in the absence of agonist). The sequence is that of Histamine H3 receptor (Hrh3) from Mus musculus (Mouse).